The chain runs to 452 residues: UDP-N-acetylmuramate--L-alanine ligase (452 aa).

110–116 contacts ATP; sequence GTHGKTT.

The protein belongs to the MurCDEF family.

It localises to the cytoplasm. The catalysed reaction is UDP-N-acetyl-alpha-D-muramate + L-alanine + ATP = UDP-N-acetyl-alpha-D-muramoyl-L-alanine + ADP + phosphate + H(+). The protein operates within cell wall biogenesis; peptidoglycan biosynthesis. Functionally, cell wall formation. The chain is UDP-N-acetylmuramate--L-alanine ligase from Francisella philomiragia subsp. philomiragia (strain ATCC 25017 / CCUG 19701 / FSC 153 / O#319-036).